The following is a 488-amino-acid chain: Cysteine desulfurase, mitochondrial (488 aa).

A disordered region spans residues 25-52; sequence LPKPLATSSSPATNAPNKTSNPKTGELH. A compositionally biased stretch (polar residues) spans 30–47; sequence ATSSSPATNAPNKTSNPK. Pyridoxal 5'-phosphate is bound by residues 157–158, Asn-237, Gln-265, and 285–287; these read AT and SSH. Lys-288 carries the post-translational modification N6-(pyridoxal phosphate)lysine. Residue Thr-325 participates in pyridoxal 5'-phosphate binding. Cys-412 serves as the catalytic Cysteine persulfide intermediate. Cys-412 provides a ligand contact to [2Fe-2S] cluster.

It belongs to the class-V pyridoxal-phosphate-dependent aminotransferase family. NifS/IscS subfamily. Pyridoxal 5'-phosphate serves as cofactor.

The protein localises to the mitochondrion. It carries out the reaction (sulfur carrier)-H + L-cysteine = (sulfur carrier)-SH + L-alanine. Functionally, catalyzes the removal of elemental sulfur from cysteine to produce alanine. It supplies the inorganic sulfur for iron-sulfur (Fe-S) clusters. Plays a role in both tRNA-processing and mitochondrial metabolism. Involved in the 2-thio-modification of both 5-carboxymethylaminomethyl-2-thiouridine in mitochondrial tRNAs and 5-methoxycarbonylmethyl-2-thiouridine (mcm5s2U) in cytoplasmic tRNAs. In Candida albicans (strain SC5314 / ATCC MYA-2876) (Yeast), this protein is Cysteine desulfurase, mitochondrial (NFS1).